The sequence spans 396 residues: Probable sugar efflux transporter (396 aa).

A run of 12 helical transmembrane segments spans residues 15 to 35, 50 to 70, 81 to 101, 103 to 123, 136 to 156, 169 to 189, 209 to 229, 246 to 266, 275 to 295, 301 to 321, 333 to 353, and 364 to 384; these read VVTL…PVGL, VGIM…PFML, LICL…AWNF, VLVI…SITA, AQAL…GLPI, TFFA…KLLP, PALM…YTAY, FATV…LVFG, SLVS…LPAA, LAIL…GMQV, VAMA…ALVG, and AIGY…VLIF.

This sequence belongs to the major facilitator superfamily. SotB (TC 2.A.1.2) family.

The protein resides in the cell inner membrane. Involved in the efflux of sugars. The physiological role may be the reduction of the intracellular concentration of toxic sugars or sugar metabolites. In Salmonella agona (strain SL483), this protein is Probable sugar efflux transporter.